Here is a 123-residue protein sequence, read N- to C-terminus: Small ribosomal subunit protein uS12 (123 aa).

At D89 the chain carries 3-methylthioaspartic acid. Residues 102 to 123 (LDTQGVKDRKQGRSKYGAKRPK) form a disordered region. Positions 113–123 (GRSKYGAKRPK) are enriched in basic residues.

It belongs to the universal ribosomal protein uS12 family. In terms of assembly, part of the 30S ribosomal subunit. Contacts proteins S8 and S17. May interact with IF1 in the 30S initiation complex.

In terms of biological role, with S4 and S5 plays an important role in translational accuracy. Functionally, interacts with and stabilizes bases of the 16S rRNA that are involved in tRNA selection in the A site and with the mRNA backbone. Located at the interface of the 30S and 50S subunits, it traverses the body of the 30S subunit contacting proteins on the other side and probably holding the rRNA structure together. The combined cluster of proteins S8, S12 and S17 appears to hold together the shoulder and platform of the 30S subunit. This chain is Small ribosomal subunit protein uS12, found in Magnetococcus marinus (strain ATCC BAA-1437 / JCM 17883 / MC-1).